The chain runs to 170 residues: Photosystem II extrinsic protein V (170 aa).

The N-terminal stretch at 1–33 (MASFFSTLRRSLNRLLIALPVLLGLMISTPAQA) is a signal peptide. 4 residues coordinate heme c: Cys-70, Cys-73, His-74, and His-125.

It belongs to the cytochrome c family. PsbV subfamily. As to quaternary structure, PSII is composed of 1 copy each of membrane proteins PsbA, PsbB, PsbC, PsbD, PsbE, PsbF, PsbH, PsbI, PsbJ, PsbK, PsbL, PsbM, PsbT, PsbX, PsbY, PsbZ, Psb30/Ycf12, peripheral proteins PsbO, CyanoQ (PsbQ), PsbU, PsbV and a large number of cofactors. It forms dimeric complexes. Heme c serves as cofactor.

The protein resides in the cellular thylakoid membrane. Functionally, one of the extrinsic, lumenal subunits of photosystem II (PSII). PSII is a light-driven water plastoquinone oxidoreductase, using light energy to abstract electrons from H(2)O, generating a proton gradient subsequently used for ATP formation. The extrinsic proteins stabilize the structure of photosystem II oxygen-evolving complex (OEC), the ion environment of oxygen evolution and protect the OEC against heat-induced inactivation. Low-potential cytochrome c that plays a role in the OEC of PSII. The polypeptide is Photosystem II extrinsic protein V (Synechococcus sp. (strain CC9311)).